The primary structure comprises 231 residues: 7-cyano-7-deazaguanine synthase (231 aa).

8–18 (FSGGQDSTTCL) contributes to the ATP binding site. Zn(2+) contacts are provided by Cys-188, Cys-197, Cys-200, and Cys-203.

The protein belongs to the QueC family. Zn(2+) serves as cofactor.

It carries out the reaction 7-carboxy-7-deazaguanine + NH4(+) + ATP = 7-cyano-7-deazaguanine + ADP + phosphate + H2O + H(+). Its pathway is purine metabolism; 7-cyano-7-deazaguanine biosynthesis. Catalyzes the ATP-dependent conversion of 7-carboxy-7-deazaguanine (CDG) to 7-cyano-7-deazaguanine (preQ(0)). The polypeptide is 7-cyano-7-deazaguanine synthase (Salmonella paratyphi B (strain ATCC BAA-1250 / SPB7)).